The following is a 90-amino-acid chain: Elongation factor 1-beta (90 aa).

It belongs to the EF-1-beta/EF-1-delta family.

Functionally, promotes the exchange of GDP for GTP in EF-1-alpha/GDP, thus allowing the regeneration of EF-1-alpha/GTP that could then be used to form the ternary complex EF-1-alpha/GTP/AAtRNA. The polypeptide is Elongation factor 1-beta (Staphylothermus marinus (strain ATCC 43588 / DSM 3639 / JCM 9404 / F1)).